We begin with the raw amino-acid sequence, 600 residues long: E3 ubiquitin-protein ligase RLIM (600 aa).

Met1 bears the N-acetylmethionine mark. The span at 1-11 shows a compositional bias: basic and acidic residues; sequence MENSDSNDKGS. Disordered stretches follow at residues 1–24, 49–355, and 417–497; these read MENSDSNDKGSDQSAAQRRSQMDR, NNLL…ERGG, and SDSE…VTFD. 2 stretches are compositionally biased toward polar residues: residues 103-131 and 140-152; these read SVRQTGNTTRSGQRGNQSWRAVSRTNPNS and INVNRNNGSQTSE. Phosphoserine is present on Ser163. Over residues 166 to 175 the composition is skewed to polar residues; the sequence is NMESSSQRQM. Over residues 176-187 the composition is skewed to low complexity; that stretch reads ENSASESASARP. Phosphoserine occurs at positions 194, 227, and 229. Residues 213–228 are compositionally biased toward basic and acidic residues; that stretch reads RSPEHRRTRARAERSR. Residues 244–255 are compositionally biased toward polar residues; that stretch reads LEQSSENEPEGS. Ser269 carries the post-translational modification Phosphoserine. The span at 288–306 shows a compositional bias: low complexity; the sequence is SQGTSSSDTGSNSESSGSG. A compositionally biased stretch (basic and acidic residues) spans 322-332; it reads RPGEYRQRDSI. Polar residues predominate over residues 333–349; that stretch reads ASRTRSRSQAPNNTVTY. The span at 448–475 shows a compositional bias: low complexity; that stretch reads SGSSSSSSPSPSSSGESSESSSEMFEGS. The segment at 546–587 adopts an RING-type zinc-finger fold; the sequence is CSVCITEYTEGNKLRKLPCSHEYHVHCIDRWLSENSTCPICR. The PDZ-binding motif lies at 597–600; the sequence is ESVV.

Belongs to the RNF12 family. Interacts (via N-terminus) with TERF1. Interacts (via C-terminus) with ESR1. Interacts with LIM/homeobox factors such as LHX3. Interacts with LDB1, LDB2 and SIN3A. Interacts with LIMK1.

It localises to the nucleus. The enzyme catalyses S-ubiquitinyl-[E2 ubiquitin-conjugating enzyme]-L-cysteine + [acceptor protein]-L-lysine = [E2 ubiquitin-conjugating enzyme]-L-cysteine + N(6)-ubiquitinyl-[acceptor protein]-L-lysine.. Its pathway is protein modification; protein ubiquitination. E3 ubiquitin-protein ligase that acts as a negative coregulator for LIM homeodomain transcription factors by mediating the ubiquitination and subsequent degradation of LIM cofactors LDB1 and LDB2 and by mediating the recruitment the SIN3a/histone deacetylase corepressor complex. Ubiquitination and degradation of LIM cofactors LDB1 and LDB2 allows DNA-bound LIM homeodomain transcription factors to interact with other protein partners such as RLIM. Plays a role in telomere length-mediated growth suppression by mediating the ubiquitination and degradation of TERF1. By targeting ZFP42 for degradation, acts as an activator of random inactivation of X chromosome in the embryo, a stochastic process in which one X chromosome is inactivated to minimize sex-related dosage differences of X-encoded genes in somatic cells of female placental mammals. The polypeptide is E3 ubiquitin-protein ligase RLIM (Rlim) (Mus musculus (Mouse)).